Consider the following 96-residue polypeptide: CLAVATA3/ESR (CLE)-related protein 43 (96 aa).

The signal sequence occupies residues 1-28 (MGCRDILLTFSVALLLISLFQIWLFREG). Positions 71–96 (FGLNNTNSRFEDSNRRIPSSPDRLHN) are disordered. N74 is a glycosylation site (N-linked (GlcNAc...) asparagine). Residues P88 and P91 each carry the hydroxyproline modification. P91 is a glycosylation site (O-linked (Ara...) hydroxyproline).

The protein belongs to the CLV3/ESR signal peptide family. In terms of processing, the O-glycosylation (arabinosylation) of the hydroxyproline Pro-91 enhances binding affinity of the CLE43p peptide for its receptor. Expressed at low levels in seedlings.

It is found in the secreted. The protein resides in the extracellular space. Extracellular signal peptide that regulates cell fate. Promotes pollen tube growth prolongation in a SKM1 and SKM2-dependent manner, especially under relatively high temperature (at 30 degrees Celsius), thus conferring tolerance against high temperature probably through the maintenance of mitochondrial activity. This is CLAVATA3/ESR (CLE)-related protein 43 from Arabidopsis thaliana (Mouse-ear cress).